We begin with the raw amino-acid sequence, 243 residues long: Beta-glucanase (243 aa).

A signal peptide spans 1–27 (MSYRVKRMLMLLVTGLFLSLSTFAASA). The 215-residue stretch at 29–243 (AQTGGSFYEP…SLHWVRYTKR (215 aa)) folds into the GH16 domain. Cysteine 61 and cysteine 90 are joined by a disulfide. The active-site Nucleophile is the glutamate 134. Glutamate 138 serves as the catalytic Proton donor.

It belongs to the glycosyl hydrolase 16 family.

It carries out the reaction Hydrolysis of (1-&gt;4)-beta-D-glucosidic linkages in beta-D-glucans containing (1-&gt;3)- and (1-&gt;4)-bonds.. The protein is Beta-glucanase (bg1) of Bacillus licheniformis.